The sequence spans 253 residues: Small ribosomal subunit protein uS2 (253 aa).

An N-acetylserine modification is found at Ser2. The disordered stretch occupies residues 212–253; that stretch reads QQAAEEAAAGEEDDEAKEEVAAEEQTEAADWAEGQSEEVASW. A compositionally biased stretch (acidic residues) spans 219 to 238; that stretch reads AAGEEDDEAKEEVAAEEQTE.

The protein belongs to the universal ribosomal protein uS2 family. As to quaternary structure, component of the small ribosomal subunit. Mature ribosomes consist of a small (40S) and a large (60S) subunit. The 40S subunit contains about 33 different proteins and 1 molecule of RNA (18S). The 60S subunit contains about 49 different proteins and 3 molecules of RNA (25S, 5.8S and 5S). Interacts with RPS21.

The protein resides in the cytoplasm. Required for the assembly and/or stability of the 40S ribosomal subunit. Required for the processing of the 20S rRNA-precursor to mature 18S rRNA in a late step of the maturation of 40S ribosomal subunits. The chain is Small ribosomal subunit protein uS2 from Eremothecium gossypii (strain ATCC 10895 / CBS 109.51 / FGSC 9923 / NRRL Y-1056) (Yeast).